The sequence spans 377 residues: NADH dehydrogenase [ubiquinone] 1 alpha subcomplex subunit 9, mitochondrial (377 aa).

Residues 1–35 constitute a mitochondrion transit peptide; it reads MAAAVRFRVVRALPMSRPAITAAATSVFCGSSHRQ. The residue at position 175 (lysine 175) is an N6-succinyllysine. Residues lysine 189 and lysine 370 each carry the N6-acetyllysine modification.

This sequence belongs to the complex I NDUFA9 subunit family. Complex I is composed of 45 different subunits. This a component of the hydrophobic protein fraction. Interacts with BLOC1S1. Interacts with SLC2A4. Interacts with CLOCK. Interacts with RAB5IF. It depends on FAD as a cofactor. Post-translationally, acetylated on lysine residues. BLOC1S1 is required for acetylation. Acetylated by CLOCK in a circadian manner.

It localises to the mitochondrion matrix. Functionally, accessory subunit of the mitochondrial membrane respiratory chain NADH dehydrogenase (Complex I), that is believed not to be involved in catalysis. Complex I functions in the transfer of electrons from NADH to the respiratory chain. The immediate electron acceptor for the enzyme is believed to be ubiquinone. This Mus musculus (Mouse) protein is NADH dehydrogenase [ubiquinone] 1 alpha subcomplex subunit 9, mitochondrial (Ndufa9).